Reading from the N-terminus, the 117-residue chain is Immunoglobulin kappa variable 1-5 (117 aa).

The N-terminal stretch at 1–22 is a signal peptide; it reads MDMRVPAQLLGLLLLWLPGAKC. Residues 23-45 form a framework-1 region; that stretch reads DIQMTQSPSTLSASVGDRVTITC. Positions 24–117 constitute an Ig-like domain; that stretch reads IQMTQSPSTL…YYCQQYNSYS (94 aa). A disulfide bridge connects residues Cys45 and Cys110. The interval 46–56 is complementarity-determining-1; the sequence is RASQSISSWLA. The framework-2 stretch occupies residues 57–71; sequence WYQQKPGKAPKLLIY. The interval 72–78 is complementarity-determining-2; it reads KASSLES. The interval 79–110 is framework-3; it reads GVPSRFSGSGSGTEFTLTISSLQPDDFATYYC. The complementarity-determining-3 stretch occupies residues 111 to 117; that stretch reads QQYNSYS.

In terms of assembly, immunoglobulins are composed of two identical heavy chains and two identical light chains; disulfide-linked.

The protein localises to the secreted. The protein resides in the cell membrane. V region of the variable domain of immunoglobulin light chains that participates in the antigen recognition. Immunoglobulins, also known as antibodies, are membrane-bound or secreted glycoproteins produced by B lymphocytes. In the recognition phase of humoral immunity, the membrane-bound immunoglobulins serve as receptors which, upon binding of a specific antigen, trigger the clonal expansion and differentiation of B lymphocytes into immunoglobulins-secreting plasma cells. Secreted immunoglobulins mediate the effector phase of humoral immunity, which results in the elimination of bound antigens. The antigen binding site is formed by the variable domain of one heavy chain, together with that of its associated light chain. Thus, each immunoglobulin has two antigen binding sites with remarkable affinity for a particular antigen. The variable domains are assembled by a process called V-(D)-J rearrangement and can then be subjected to somatic hypermutations which, after exposure to antigen and selection, allow affinity maturation for a particular antigen. In Homo sapiens (Human), this protein is Immunoglobulin kappa variable 1-5.